The following is a 192-amino-acid chain: uncharacterized protein (192 aa).

Residues Gly-72–Val-192 form the B12-binding domain.

This is an uncharacterized protein from Rhodobacter capsulatus (Rhodopseudomonas capsulata).